Consider the following 272-residue polypeptide: 3-methyl-2-oxobutanoate hydroxymethyltransferase (272 aa).

Positions 42 and 86 each coordinate Mg(2+). Residues 42-43, aspartate 86, and lysine 116 each bind 3-methyl-2-oxobutanoate; that span reads DS. Glutamate 118 lines the Mg(2+) pocket. The active-site Proton acceptor is glutamate 185.

It belongs to the PanB family. As to quaternary structure, homodecamer; pentamer of dimers. Requires Mg(2+) as cofactor.

The protein localises to the cytoplasm. The catalysed reaction is 3-methyl-2-oxobutanoate + (6R)-5,10-methylene-5,6,7,8-tetrahydrofolate + H2O = 2-dehydropantoate + (6S)-5,6,7,8-tetrahydrofolate. Its pathway is cofactor biosynthesis; (R)-pantothenate biosynthesis; (R)-pantoate from 3-methyl-2-oxobutanoate: step 1/2. In terms of biological role, catalyzes the reversible reaction in which hydroxymethyl group from 5,10-methylenetetrahydrofolate is transferred onto alpha-ketoisovalerate to form ketopantoate. This is 3-methyl-2-oxobutanoate hydroxymethyltransferase from Prochlorococcus marinus (strain MIT 9313).